A 34-amino-acid chain; its full sequence is Small ribosomal subunit protein uS2c (34 aa).

The protein belongs to the universal ribosomal protein uS2 family.

Its subcellular location is the plastid. It is found in the chloroplast. The sequence is that of Small ribosomal subunit protein uS2c (rps2) from Ochrosphaera neapolitana.